Here is a 185-residue protein sequence, read N- to C-terminus: Elongation factor P (185 aa).

It belongs to the elongation factor P family.

Its subcellular location is the cytoplasm. It participates in protein biosynthesis; polypeptide chain elongation. In terms of biological role, involved in peptide bond synthesis. Stimulates efficient translation and peptide-bond synthesis on native or reconstituted 70S ribosomes in vitro. Probably functions indirectly by altering the affinity of the ribosome for aminoacyl-tRNA, thus increasing their reactivity as acceptors for peptidyl transferase. In Acaryochloris marina (strain MBIC 11017), this protein is Elongation factor P.